We begin with the raw amino-acid sequence, 235 residues long: RNA polymerase sigma factor SigI7 (235 aa).

A Polymerase core binding motif is present at residues 49 to 62 (DELSIALMAFVETI). The H-T-H motif DNA-binding region spans 191-210 (VAEIEQSLKIPRKTIERARK).

It belongs to the sigma-70 factor family. SigI subfamily. Interacts with RsgI7.

The protein localises to the cytoplasm. Negatively regulated by the anti-sigma-I factor RsgI7. Functionally, sigma factors are initiation factors that promote the attachment of RNA polymerase to specific initiation sites and are then released. The chain is RNA polymerase sigma factor SigI7 from Acetivibrio thermocellus (strain ATCC 27405 / DSM 1237 / JCM 9322 / NBRC 103400 / NCIMB 10682 / NRRL B-4536 / VPI 7372) (Clostridium thermocellum).